Here is a 318-residue protein sequence, read N- to C-terminus: MPMTNLLLLIVPILIAMAFLMLTERKILGYMQLRKGPNIVGPYGLLQPFADAMKLFTKEPLKPSTSTITLYITAPTLALTIALLLWTPLPMPNPLVNLNLGLLFILATSSLAVYSILWSGWASNSNYALIGALRAVAQTISYEVTLAIILLSTLLMSGSFNLSTLVTTQEHLWLILPTWPLAMMWFISTLAETNRTPFDLTEGESELVSGFNIEYAAGPFALFFMAEYMNIIMMNTLTATIFLGATYNTHSPELYTTYFVTKALLLTSLFLWIRTAYPRFRYDQLMHLLWKNFLPLTLASLMWYISMPTTISSIPPQT.

The next 8 membrane-spanning stretches (helical) occupy residues 2–22 (PMTNLLLLIVPILIAMAFLML), 68–88 (ITLYITAPTLALTIALLLWTP), 100–120 (LGLLFILATSSLAVYSILWSG), 146–166 (LAIILLSTLLMSGSFNLSTLV), 171–191 (HLWLILPTWPLAMMWFISTLA), 213–233 (IEYAAGPFALFFMAEYMNIIM), 253–273 (ELYTTYFVTKALLLTSLFLWI), and 285–305 (LMHLLWKNFLPLTLASLMWYI).

Belongs to the complex I subunit 1 family. In terms of assembly, core subunit of respiratory chain NADH dehydrogenase (Complex I) which is composed of 45 different subunits.

The protein localises to the mitochondrion inner membrane. It catalyses the reaction a ubiquinone + NADH + 5 H(+)(in) = a ubiquinol + NAD(+) + 4 H(+)(out). Its function is as follows. Core subunit of the mitochondrial membrane respiratory chain NADH dehydrogenase (Complex I) which catalyzes electron transfer from NADH through the respiratory chain, using ubiquinone as an electron acceptor. Essential for the catalytic activity and assembly of complex I. This is NADH-ubiquinone oxidoreductase chain 1 (MT-ND1) from Pan troglodytes (Chimpanzee).